The primary structure comprises 498 residues: ATP synthase subunit beta, chloroplastic (498 aa).

172 to 179 (GGAGVGKT) contributes to the ATP binding site.

Belongs to the ATPase alpha/beta chains family. F-type ATPases have 2 components, CF(1) - the catalytic core - and CF(0) - the membrane proton channel. CF(1) has five subunits: alpha(3), beta(3), gamma(1), delta(1), epsilon(1). CF(0) has four main subunits: a(1), b(1), b'(1) and c(9-12).

The protein localises to the plastid. It localises to the chloroplast thylakoid membrane. It carries out the reaction ATP + H2O + 4 H(+)(in) = ADP + phosphate + 5 H(+)(out). Functionally, produces ATP from ADP in the presence of a proton gradient across the membrane. The catalytic sites are hosted primarily by the beta subunits. The protein is ATP synthase subunit beta, chloroplastic of Oenothera biennis (German evening primrose).